We begin with the raw amino-acid sequence, 486 residues long: Aromatic-L-amino-acid decarboxylase (486 aa).

Residue M1 is modified to N-acetylmethionine. 2 consecutive repeat copies span residues 58 to 115 and 118 to 178. The interval 58-178 is 2 X approximate tandem repeats; that stretch reads QDVEKIIMPG…AASPGLTQGA (121 aa). Residue T82 coordinates substrate. 2 residues coordinate pyridoxal 5'-phosphate: A148 and S149. H192 is a binding site for substrate. Pyridoxal 5'-phosphate contacts are provided by T246 and N300. At K303 the chain carries N6-(pyridoxal phosphate)lysine.

It belongs to the group II decarboxylase family. In terms of assembly, homodimer. It depends on pyridoxal 5'-phosphate as a cofactor.

The catalysed reaction is L-dopa + H(+) = dopamine + CO2. It catalyses the reaction 5-hydroxy-L-tryptophan + H(+) = serotonin + CO2. It participates in catecholamine biosynthesis; dopamine biosynthesis; dopamine from L-tyrosine: step 2/2. Catalyzes the decarboxylation of L-3,4-dihydroxyphenylalanine (DOPA) to dopamine and L-5-hydroxytryptophan to serotonin. This is Aromatic-L-amino-acid decarboxylase (DDC) from Sus scrofa (Pig).